A 451-amino-acid polypeptide reads, in one-letter code: Type 3 secretion system ATPase (451 aa).

184–189 (GGGKST) is an ATP binding site.

This sequence belongs to the ATPase alpha/beta chains family. T3SS ATPase subfamily. As to quaternary structure, the core secretion machinery of the T3SS is composed of approximately 20 different proteins, including cytoplasmic components, a base, an export apparatus and a needle. This subunit is part of the cytosolic complex. Forms homohexamers.

Its subcellular location is the cytoplasm. The enzyme catalyses ATP + H2O + cellular proteinSide 1 = ADP + phosphate + cellular proteinSide 2.. Functionally, ATPase component of the type III secretion system (T3SS), also called injectisome, which is used to inject bacterial effector proteins into eukaryotic host cells. Acts as a molecular motor to provide the energy that is required for the export of proteins. Required for type III secretion apparatus (T3SA) formation, proper protein secretion, host cell invasion and virulence. May play a critical role in T3SS substrate recognition, disassembly of the effector/chaperone complex and unfolding of the effector in an ATP-dependent manner prior to secretion. The sequence is that of Type 3 secretion system ATPase from Sinorhizobium fredii (strain NBRC 101917 / NGR234).